A 505-amino-acid polypeptide reads, in one-letter code: Activin receptor type-1B (505 aa).

Positions 1–23 (MAESAGASSFFPLVVLLLAGSGG) are cleaved as a signal peptide. Topologically, residues 24–126 (SGPRGIQALL…EHPSMWGPVE (103 aa)) are extracellular. Asn43 carries an N-linked (GlcNAc...) asparagine glycan. The chain crosses the membrane as a helical span at residues 127–149 (LVGIIAGPVFLLFLIIIIVFLVI). Over 150–505 (NYHQRVYHNR…QLSVQEDVKI (356 aa)) the chain is Cytoplasmic. Positions 177–206 (KTLQDLVYDLSTSGSGSGLPLFVQRTVART) constitute a GS domain. A Protein kinase domain is found at 207-497 (IVLQEIIGKG…LRIKKTLSQL (291 aa)). Residues 213-221 (IGKGRFGEV) and Lys234 contribute to the ATP site. Residue Asp335 is the Proton acceptor of the active site. Tyr380 is subject to Phosphotyrosine.

The protein belongs to the protein kinase superfamily. TKL Ser/Thr protein kinase family. TGFB receptor subfamily. In terms of assembly, forms an activin receptor complex with activin receptor type-2 (ACVR2A or ACVR2B). Part of a complex consisting of MAGI2/ARIP1, ACVR2A, ACVR1B and SMAD3. Interacts with SMAD2 and SMAD3. Interacts with SMAD7. Interacts with FKBP1A. Interacts with IGSF1. Interacts with CRIPTO. Interacts with TDP2. Interacts with TSC22D1/TSC-22. Mg(2+) is required as a cofactor. It depends on Mn(2+) as a cofactor. Autophosphorylated. Phosphorylated by activin receptor type-2 (ACVR2A or ACVR2B) in response to activin-binding at serine and threonine residues in the GS domain. Phosphorylation of ACVR1B by activin receptor type-2 regulates association with SMAD7. Post-translationally, ubiquitinated. Level of ubiquitination is regulated by the SMAD7-SMURF1 complex. In terms of processing, ubiquitinated. Urogenital ridge, testis, ovary, brain and lungs.

It is found in the cell membrane. The catalysed reaction is L-threonyl-[receptor-protein] + ATP = O-phospho-L-threonyl-[receptor-protein] + ADP + H(+). It catalyses the reaction L-seryl-[receptor-protein] + ATP = O-phospho-L-seryl-[receptor-protein] + ADP + H(+). Its activity is regulated as follows. Activin receptor type-2 (ACVR2A or ACVR2B) activates the type-1 receptor through phosphorylation of its regulatory GS domain. Functionally, transmembrane serine/threonine kinase activin type-1 receptor forming an activin receptor complex with activin receptor type-2 (ACVR2A or ACVR2B). Transduces the activin signal from the cell surface to the cytoplasm and is thus regulating a many physiological and pathological processes including neuronal differentiation and neuronal survival, hair follicle development and cycling, FSH production by the pituitary gland, wound healing, extracellular matrix production, immunosuppression and carcinogenesis. Activin is also thought to have a paracrine or autocrine role in follicular development in the ovary. Within the receptor complex, type-2 receptors (ACVR2A and/or ACVR2B) act as a primary activin receptors whereas the type-1 receptors like ACVR1B act as downstream transducers of activin signals. Activin binds to type-2 receptor at the plasma membrane and activates its serine-threonine kinase. The activated receptor type-2 then phosphorylates and activates the type-1 receptor such as ACVR1B. Once activated, the type-1 receptor binds and phosphorylates the SMAD proteins SMAD2 and SMAD3, on serine residues of the C-terminal tail. Soon after their association with the activin receptor and subsequent phosphorylation, SMAD2 and SMAD3 are released into the cytoplasm where they interact with the common partner SMAD4. This SMAD complex translocates into the nucleus where it mediates activin-induced transcription. Inhibitory SMAD7, which is recruited to ACVR1B through FKBP1A, can prevent the association of SMAD2 and SMAD3 with the activin receptor complex, thereby blocking the activin signal. Activin signal transduction is also antagonized by the binding to the receptor of inhibin-B via the IGSF1 inhibin coreceptor. ACVR1B also phosphorylates TDP2. The polypeptide is Activin receptor type-1B (Acvr1b) (Rattus norvegicus (Rat)).